Reading from the N-terminus, the 143-residue chain is MRHGFKGRRFARSISHRKSMFANLAVSLLEHEQIVTTLPKAKDLRPIVEKLVTLGKRGDLHARRQVIAQIGNEGVVKRLFDTIAPRYANRNGGYLRIMKAGFRHGDNAAMAVIEFVDRDTSAKGAGDRARLEAEGTDAEAAAA.

Positions 124–133 (GAGDRARLEA) are enriched in basic and acidic residues. Positions 124 to 143 (GAGDRARLEAEGTDAEAAAA) are disordered.

Belongs to the bacterial ribosomal protein bL17 family. In terms of assembly, part of the 50S ribosomal subunit. Contacts protein L32.

The polypeptide is Large ribosomal subunit protein bL17 (Mesorhizobium japonicum (strain LMG 29417 / CECT 9101 / MAFF 303099) (Mesorhizobium loti (strain MAFF 303099))).